Consider the following 342-residue polypeptide: Phosphate acyltransferase (342 aa).

The protein belongs to the PlsX family. In terms of assembly, homodimer. Probably interacts with PlsY.

The protein resides in the cytoplasm. It catalyses the reaction a fatty acyl-[ACP] + phosphate = an acyl phosphate + holo-[ACP]. It participates in lipid metabolism; phospholipid metabolism. Catalyzes the reversible formation of acyl-phosphate (acyl-PO(4)) from acyl-[acyl-carrier-protein] (acyl-ACP). This enzyme utilizes acyl-ACP as fatty acyl donor, but not acyl-CoA. The chain is Phosphate acyltransferase from Shewanella sp. (strain ANA-3).